Consider the following 242-residue polypeptide: Ubiquinone biosynthesis O-methyltransferase (242 aa).

The S-adenosyl-L-methionine site is built by R44, G64, D85, and M129.

Belongs to the methyltransferase superfamily. UbiG/COQ3 family.

The enzyme catalyses a 3-demethylubiquinol + S-adenosyl-L-methionine = a ubiquinol + S-adenosyl-L-homocysteine + H(+). It carries out the reaction a 3-(all-trans-polyprenyl)benzene-1,2-diol + S-adenosyl-L-methionine = a 2-methoxy-6-(all-trans-polyprenyl)phenol + S-adenosyl-L-homocysteine + H(+). Its pathway is cofactor biosynthesis; ubiquinone biosynthesis. Its function is as follows. O-methyltransferase that catalyzes the 2 O-methylation steps in the ubiquinone biosynthetic pathway. This Salmonella arizonae (strain ATCC BAA-731 / CDC346-86 / RSK2980) protein is Ubiquinone biosynthesis O-methyltransferase.